The primary structure comprises 216 residues: MRVAIIDYGSGNLRSATKAFERAAREAGIDATIDLTDKPDHVASADRIVLPGVGAYADCSAGLNAMPGMHEALIEAVEKKAHPFLGICVGMQLMSSRGLEKTVSTGLGWIEGDVVEMTPSDPTLKIPQIGWNTLEIRHAHPLFDGIKTGADGLHAYFVHSYHLAAKHSTDVIATTNYGGAMTAFVGRDNMAGAQFHPEKSQTLGLALISNFLRWKP.

In terms of domain architecture, Glutamine amidotransferase type-1 spans 2–216 (RVAIIDYGSG…LISNFLRWKP (215 aa)). The active-site Nucleophile is the Cys88. Catalysis depends on residues His196 and Glu198.

In terms of assembly, heterodimer of HisH and HisF.

The protein resides in the cytoplasm. It carries out the reaction 5-[(5-phospho-1-deoxy-D-ribulos-1-ylimino)methylamino]-1-(5-phospho-beta-D-ribosyl)imidazole-4-carboxamide + L-glutamine = D-erythro-1-(imidazol-4-yl)glycerol 3-phosphate + 5-amino-1-(5-phospho-beta-D-ribosyl)imidazole-4-carboxamide + L-glutamate + H(+). It catalyses the reaction L-glutamine + H2O = L-glutamate + NH4(+). It participates in amino-acid biosynthesis; L-histidine biosynthesis; L-histidine from 5-phospho-alpha-D-ribose 1-diphosphate: step 5/9. Its function is as follows. IGPS catalyzes the conversion of PRFAR and glutamine to IGP, AICAR and glutamate. The HisH subunit catalyzes the hydrolysis of glutamine to glutamate and ammonia as part of the synthesis of IGP and AICAR. The resulting ammonia molecule is channeled to the active site of HisF. The sequence is that of Imidazole glycerol phosphate synthase subunit HisH from Agrobacterium fabrum (strain C58 / ATCC 33970) (Agrobacterium tumefaciens (strain C58)).